The chain runs to 545 residues: Transducer protein Htr7 (545 aa).

Helical transmembrane passes span 10-30 (AVVAPLGDAVGAIGFGAAAAL), 44-64 (FWMAFTFASLLGVTWTVSLML), and 80-100 (PLMATTVAVFAIGGTATLAIV). The disordered stretch occupies residues 111-157 (AQRRQEAEEERAEAERAREKAEQKQAEAERQTAEAESAKQDARERSA). Over residues 123-157 (EAERAREKAEQKQAEAERQTAEAESAKQDARERSA) the composition is skewed to basic and acidic residues. The HAMP domain occupies 164–217 (ADLESQATEVGATLEAASDGDLTARVDATTDNAEIAEVATVVNDMLTTMERTID). The 241-residue stretch at 236 to 476 (GAKEIQDASQ…RVVSSVDDIA (241 aa)) folds into the Methyl-accepting transducer domain. The residue at position 281 (E281) is a Glutamate methyl ester (Glu). Residues 521-545 (LNEFRTEATGTAHGEATDAPAGQSD) are disordered. Over residues 527-539 (EATGTAHGEATDA) the composition is skewed to low complexity.

It belongs to the methyl-accepting chemotaxis (MCP) protein family. Methylated by CheR.

The protein resides in the cell membrane. Functionally, potentially involved in chemo- or phototactic signal transduction. This chain is Transducer protein Htr7 (htr7), found in Halobacterium salinarum (strain ATCC 29341 / DSM 671 / R1).